A 611-amino-acid chain; its full sequence is MSKIIGIDLGTTNSCVAVMEGGEPKVIPNPEGNRTTPSVVAFKNEERQVGEVAKRQAITNPNTIMSVKRHMGTDYKVEIEGKEYTPQEISAIILQNLKASAEAYLGETVTKAVITVPAYFNDAERQATKDAGRIAGLEVERIINEPTAAALAYGLEKQDEEQKILVYDLGGGTFDVSILELADGTFEVISTAGDNRLGGDDFDQVIIDHLVAEFKKENNIDLSQDKMALQRLKDAAEKAKKDLSGVTQTQISLPFISAGAAXPLHLELTLTRAKFEELSANLVERTLEPTRRALKDAGLSASELDRVILVGGSTRIPAVQEAIKRETGKEPYKGVNPDEVVALGAAVQGGVLTGDVEGVLLLDVTPLSLGIETMGGVFTKLIERNTTIPTSKSQVFSTAADNQPAVDIHVLQGERPMSADNKTLGRFQLTDIPPAPRGIPQIEVTFDIDANGIVNVRAKDLGTSKEQAITIQSSSGLSDEEVDRMVKEAEANADADQKRKEEVELRNEADQLVFQTDKVVKDLEGKVDAAEVAKATEAKEALQAAIEKNELEEIRAKKDALQEIVQQLTVKLYEQAQAAAGQAEGAQGAQDAGAKKDNVVDAEFEEVKEDK.

Position 173 is a phosphothreonine; by autocatalysis (Thr-173). Over residues 579–592 the composition is skewed to low complexity; the sequence is AAGQAEGAQGAQDA. Positions 579–598 are disordered; sequence AAGQAEGAQGAQDAGAKKDN.

The protein belongs to the heat shock protein 70 family.

Functionally, acts as a chaperone. This is Chaperone protein DnaK from Bacillus cereus (strain ATCC 10987 / NRS 248).